Here is a 921-residue protein sequence, read N- to C-terminus: Leucine--tRNA ligase (921 aa).

Residues Pro-41–His-52 carry the 'HIGH' region motif. The short motif at Lys-695–Ser-699 is the 'KMSKS' region element. ATP is bound at residue Lys-698.

It belongs to the class-I aminoacyl-tRNA synthetase family.

The protein resides in the cytoplasm. The catalysed reaction is tRNA(Leu) + L-leucine + ATP = L-leucyl-tRNA(Leu) + AMP + diphosphate. The sequence is that of Leucine--tRNA ligase from Cytophaga hutchinsonii (strain ATCC 33406 / DSM 1761 / CIP 103989 / NBRC 15051 / NCIMB 9469 / D465).